The primary structure comprises 110 residues: UPF0060 membrane protein Rpal_4363 (110 aa).

Helical transmembrane passes span 4-24, 31-51, 59-79, and 88-108; these read LLTF…FWAW, PLWL…LTLA, AYAA…WAIE, and VIGA…PRAL.

Belongs to the UPF0060 family.

The protein localises to the cell inner membrane. In Rhodopseudomonas palustris (strain TIE-1), this protein is UPF0060 membrane protein Rpal_4363.